A 252-amino-acid chain; its full sequence is Flap endonuclease Xni (252 aa).

Asp105 contributes to the Mg(2+) binding site. Positions 161–251 (VESTQFIDYL…NVNLKQFRIE (91 aa)) constitute a 5'-3' exonuclease domain. Residues Leu172, Ala173, Pro181, Val183, and Ile186 each coordinate K(+). Residues 185–190 (GIGPKS) form an interaction with DNA region.

It belongs to the Xni family. Requires Mg(2+) as cofactor. K(+) is required as a cofactor.

Its function is as follows. Has flap endonuclease activity. During DNA replication, flap endonucleases cleave the 5'-overhanging flap structure that is generated by displacement synthesis when DNA polymerase encounters the 5'-end of a downstream Okazaki fragment. This is Flap endonuclease Xni from Shewanella halifaxensis (strain HAW-EB4).